The primary structure comprises 588 residues: Polyamine deacetylase HDAC10 (588 aa).

Residues 1–302 (MGTALVYHED…AGGRICAVLE (302 aa)) form a histone deacetylase region. Residue His-135 is part of the active site.

Belongs to the histone deacetylase family. HD type 2 subfamily. Interacts with HDAC3. Interacts with HDAC2 and NCOR2/SMRT. Interacts with HSPA8/HSC70. Interacts with MSH2.

It localises to the cytoplasm. The protein localises to the nucleus. The catalysed reaction is N(8)-acetylspermidine + H2O = spermidine + acetate. It carries out the reaction N-acetylputrescine + H2O = putrescine + acetate. It catalyses the reaction N-acetylcadaverine + H2O = cadaverine + acetate. The enzyme catalyses N(6)-acetyl-L-lysyl-[protein] + H2O = L-lysyl-[protein] + acetate. In terms of biological role, polyamine deacetylase (PDAC), which acts preferentially on N(8)-acetylspermidine, and also on acetylcadaverine and acetylputrescine. Exhibits attenuated catalytic activity toward N(1),N(8)-diacetylspermidine and very low activity, if any, toward N(1)-acetylspermidine. Histone deacetylase activity has been observed in vitro. Has also been shown to be involved in MSH2 deacetylation. The physiological relevance of protein/histone deacetylase activity is unclear and could be very weak. May play a role in the promotion of late stages of autophagy, possibly autophagosome-lysosome fusion and/or lysosomal exocytosis in neuroblastoma cells. May play a role in homologous recombination. May promote DNA mismatch repair. This is Polyamine deacetylase HDAC10 (Hdac10) from Rattus norvegicus (Rat).